A 317-amino-acid polypeptide reads, in one-letter code: Aspartate carbamoyltransferase catalytic subunit (317 aa).

Carbamoyl phosphate is bound by residues arginine 66 and threonine 67. Lysine 94 contributes to the L-aspartate binding site. Residues arginine 116, histidine 144, and glutamine 147 each contribute to the carbamoyl phosphate site. Positions 177 and 231 each coordinate L-aspartate. Residues glycine 272 and proline 273 each contribute to the carbamoyl phosphate site.

This sequence belongs to the aspartate/ornithine carbamoyltransferase superfamily. ATCase family. In terms of assembly, heterododecamer (2C3:3R2) of six catalytic PyrB chains organized as two trimers (C3), and six regulatory PyrI chains organized as three dimers (R2).

It carries out the reaction carbamoyl phosphate + L-aspartate = N-carbamoyl-L-aspartate + phosphate + H(+). Its pathway is pyrimidine metabolism; UMP biosynthesis via de novo pathway; (S)-dihydroorotate from bicarbonate: step 2/3. Its function is as follows. Catalyzes the condensation of carbamoyl phosphate and aspartate to form carbamoyl aspartate and inorganic phosphate, the committed step in the de novo pyrimidine nucleotide biosynthesis pathway. In Nitrobacter hamburgensis (strain DSM 10229 / NCIMB 13809 / X14), this protein is Aspartate carbamoyltransferase catalytic subunit.